Reading from the N-terminus, the 67-residue chain is Large ribosomal subunit protein bL31 (67 aa).

Zn(2+) contacts are provided by C16, C18, C36, and C39.

This sequence belongs to the bacterial ribosomal protein bL31 family. Type A subfamily. As to quaternary structure, part of the 50S ribosomal subunit. Zn(2+) is required as a cofactor.

Functionally, binds the 23S rRNA. This is Large ribosomal subunit protein bL31 from Syntrophomonas wolfei subsp. wolfei (strain DSM 2245B / Goettingen).